A 147-amino-acid polypeptide reads, in one-letter code: MQTTHLGKNSPIPQSPEEASLDYVPNPRQGKNYLIRFAIPEFTSLCPVTGQPDFAHLVIDYVPDKLIVESKSLKLFLGSFRNHRAFHEDCTVGIGEKLFTEMKAQWLRIGGYWYPRGGIPIDVFWQSGAAPQDVWLPEQGVPPYRGR.

Residues 1–23 (MQTTHLGKNSPIPQSPEEASLDY) are disordered. C46 functions as the Thioimide intermediate in the catalytic mechanism. Catalysis depends on D53, which acts as the Proton donor. Substrate contacts are provided by residues 68 to 70 (VES) and 87 to 88 (HE).

Belongs to the GTP cyclohydrolase I family. QueF type 1 subfamily.

It is found in the cytoplasm. The enzyme catalyses 7-aminomethyl-7-carbaguanine + 2 NADP(+) = 7-cyano-7-deazaguanine + 2 NADPH + 3 H(+). Its pathway is tRNA modification; tRNA-queuosine biosynthesis. In terms of biological role, catalyzes the NADPH-dependent reduction of 7-cyano-7-deazaguanine (preQ0) to 7-aminomethyl-7-deazaguanine (preQ1). In Zymomonas mobilis subsp. mobilis (strain ATCC 31821 / ZM4 / CP4), this protein is NADPH-dependent 7-cyano-7-deazaguanine reductase.